The chain runs to 374 residues: Centrosomal protein of 41 kDa (374 aa).

The region spanning 176-273 is the Rhodanese domain; it reads PDCPYLLLDV…VAQKFPEGMT (98 aa). 2 disordered regions span residues 279 to 301 and 329 to 374; these read ISCL…QTSQ and ETSS…RPWK. Residues 329–349 show a composition bias toward low complexity; the sequence is ETSSRLSSRMSTSSARSKAST.

It belongs to the CEP41 family. As to expression, expressed in various ciliary organs, including Kupffer's vesicle, ear and heart, as well as brain and kidney.

It localises to the cytoplasm. Its subcellular location is the cytoskeleton. The protein resides in the microtubule organizing center. The protein localises to the centrosome. It is found in the cell projection. It localises to the cilium. Its subcellular location is the cilium basal body. Its function is as follows. Required during ciliogenesis for tubulin glutamylation in cilium. Probably acts by participating in the transport of tubulin polyglutamylases between the basal body and the cilium. The sequence is that of Centrosomal protein of 41 kDa (cep41) from Danio rerio (Zebrafish).